Here is a 234-residue protein sequence, read N- to C-terminus: Ubiquitin domain-containing protein 2 (234 aa).

Residues M1–T46 form a disordered region. Polar residues predominate over residues H9–G21. Positions L32–S41 are enriched in basic and acidic residues. The Ubiquitin-like domain occupies S152 to Q227.

It localises to the cytoplasm. The protein is Ubiquitin domain-containing protein 2 (Ubtd2) of Mus musculus (Mouse).